The chain runs to 290 residues: Acetyl-coenzyme A carboxylase carboxyl transferase subunit beta (290 aa).

The region spanning 28–290 is the CoA carboxyltransferase N-terminal domain; the sequence is IMTKCPKCKK…TGGEYEWLQD (263 aa). 4 residues coordinate Zn(2+): cysteine 32, cysteine 35, cysteine 51, and cysteine 54. The C4-type zinc finger occupies 32-54; that stretch reads CPKCKKIMLTKELDKNLRVCMNC.

It belongs to the AccD/PCCB family. Acetyl-CoA carboxylase is a heterohexamer composed of biotin carboxyl carrier protein (AccB), biotin carboxylase (AccC) and two subunits each of ACCase subunit alpha (AccA) and ACCase subunit beta (AccD). Zn(2+) serves as cofactor.

The protein localises to the cytoplasm. It carries out the reaction N(6)-carboxybiotinyl-L-lysyl-[protein] + acetyl-CoA = N(6)-biotinyl-L-lysyl-[protein] + malonyl-CoA. The protein operates within lipid metabolism; malonyl-CoA biosynthesis; malonyl-CoA from acetyl-CoA: step 1/1. Functionally, component of the acetyl coenzyme A carboxylase (ACC) complex. Biotin carboxylase (BC) catalyzes the carboxylation of biotin on its carrier protein (BCCP) and then the CO(2) group is transferred by the transcarboxylase to acetyl-CoA to form malonyl-CoA. The protein is Acetyl-coenzyme A carboxylase carboxyl transferase subunit beta of Bacillus velezensis (strain DSM 23117 / BGSC 10A6 / LMG 26770 / FZB42) (Bacillus amyloliquefaciens subsp. plantarum).